Consider the following 169-residue polypeptide: Peptide deformylase (169 aa).

Fe cation is bound by residues cysteine 91 and histidine 133. Glutamate 134 is an active-site residue. Histidine 137 serves as a coordination point for Fe cation.

This sequence belongs to the polypeptide deformylase family. Requires Fe(2+) as cofactor.

The enzyme catalyses N-terminal N-formyl-L-methionyl-[peptide] + H2O = N-terminal L-methionyl-[peptide] + formate. Its function is as follows. Removes the formyl group from the N-terminal Met of newly synthesized proteins. Requires at least a dipeptide for an efficient rate of reaction. N-terminal L-methionine is a prerequisite for activity but the enzyme has broad specificity at other positions. This chain is Peptide deformylase, found in Klebsiella pneumoniae subsp. pneumoniae (strain ATCC 700721 / MGH 78578).